A 299-amino-acid chain; its full sequence is Probable inactive heme oxygenase 2, chloroplastic (299 aa).

Positions 1–15 (MASLLRPTPLLSTPR) are enriched in low complexity. Disordered stretches follow at residues 1–20 (MASL…LTHS), 45–70 (LCRS…KQYP), and 96–126 (DLSE…EETW). The transit peptide at 1 to 83 (MASLLRPTPL…IGITEEMRFV (83 aa)) directs the protein to the chloroplast. The span at 46–57 (CRSTPTPSQQKA) shows a compositional bias: polar residues. Over residues 58–67 (SQRKRTRYRK) the composition is skewed to basic residues. Over residues 105 to 122 (EKEEEEEEEDDDDDDEVK) the composition is skewed to acidic residues.

It belongs to the heme oxygenase family. As to expression, widely expressed at low levels.

The protein localises to the plastid. Its subcellular location is the chloroplast. Probable inactive heme oxygenase. Binds protoporphyrin IX, a precursor for both heme and chlorophyll biosynthesis. Plays a minor role in phytochrome assembly and photomorphogenesis. This is Probable inactive heme oxygenase 2, chloroplastic (HO2) from Arabidopsis thaliana (Mouse-ear cress).